The sequence spans 233 residues: Phosphoribosylformylglycinamidine synthase subunit PurQ (233 aa).

The Glutamine amidotransferase type-1 domain maps to 3–233 (SAVLVFPGIN…GLAQHLAKAA (231 aa)). C87 (nucleophile) is an active-site residue. Active-site residues include H204 and E206.

As to quaternary structure, part of the FGAM synthase complex composed of 1 PurL, 1 PurQ and 2 PurS subunits.

The protein localises to the cytoplasm. It carries out the reaction N(2)-formyl-N(1)-(5-phospho-beta-D-ribosyl)glycinamide + L-glutamine + ATP + H2O = 2-formamido-N(1)-(5-O-phospho-beta-D-ribosyl)acetamidine + L-glutamate + ADP + phosphate + H(+). It catalyses the reaction L-glutamine + H2O = L-glutamate + NH4(+). Its pathway is purine metabolism; IMP biosynthesis via de novo pathway; 5-amino-1-(5-phospho-D-ribosyl)imidazole from N(2)-formyl-N(1)-(5-phospho-D-ribosyl)glycinamide: step 1/2. Part of the phosphoribosylformylglycinamidine synthase complex involved in the purines biosynthetic pathway. Catalyzes the ATP-dependent conversion of formylglycinamide ribonucleotide (FGAR) and glutamine to yield formylglycinamidine ribonucleotide (FGAM) and glutamate. The FGAM synthase complex is composed of three subunits. PurQ produces an ammonia molecule by converting glutamine to glutamate. PurL transfers the ammonia molecule to FGAR to form FGAM in an ATP-dependent manner. PurS interacts with PurQ and PurL and is thought to assist in the transfer of the ammonia molecule from PurQ to PurL. The protein is Phosphoribosylformylglycinamidine synthase subunit PurQ of Rhodopseudomonas palustris (strain ATCC BAA-98 / CGA009).